A 348-amino-acid polypeptide reads, in one-letter code: Methylthioribose-1-phosphate isomerase (348 aa).

Residues 54 to 56 (RGA), Arg-96, and Gln-199 contribute to the substrate site. Residue Asp-240 is the Proton donor of the active site. Position 250 to 251 (250 to 251 (NK)) interacts with substrate.

The protein belongs to the eIF-2B alpha/beta/delta subunits family. MtnA subfamily.

The enzyme catalyses 5-(methylsulfanyl)-alpha-D-ribose 1-phosphate = 5-(methylsulfanyl)-D-ribulose 1-phosphate. It participates in amino-acid biosynthesis; L-methionine biosynthesis via salvage pathway; L-methionine from S-methyl-5-thio-alpha-D-ribose 1-phosphate: step 1/6. Functionally, catalyzes the interconversion of methylthioribose-1-phosphate (MTR-1-P) into methylthioribulose-1-phosphate (MTRu-1-P). This is Methylthioribose-1-phosphate isomerase from Thioalkalivibrio sulfidiphilus (strain HL-EbGR7).